A 347-amino-acid polypeptide reads, in one-letter code: Monopolin complex subunit LRS4 (347 aa).

Positions 46–118 (KKVVDETLFL…QISVDKHNKE (73 aa)) form a coiled coil. The segment covering 112 to 130 (VDKHNKERTPSTGRDEQQR) has biased composition (basic and acidic residues). Disordered stretches follow at residues 112-183 (VDKH…SLLS) and 208-230 (RNDT…LQKS). Polar residues-rich tracts occupy residues 131–140 (NSKAAHTSKP) and 155–172 (NNQT…PTSQ). S168 and S230 each carry phosphoserine.

Component of the monopolin complex composed of at least CSM1, LRS4 and MAM1. The complex associates with the kinetochore. Post-translationally, phosphorylated by CDC5. This phosphorylation is required for the location to the kinetochores during late pachytene.

The protein resides in the nucleus. Its subcellular location is the nucleolus. It localises to the chromosome. The protein localises to the centromere. Functionally, component of the monopolin complex which promotes monoorientation during meiosis I, required for chromosome segregation during meiosis. Involved in rDNA silencing. The protein is Monopolin complex subunit LRS4 (LRS4) of Saccharomyces cerevisiae (strain ATCC 204508 / S288c) (Baker's yeast).